The sequence spans 178 residues: MSRIGYKVVNLPEGVEVKQDGNVVTVKGPKGELTREFSDKITIKVEGNEVSFERSAEDNKTKALHGTTRSNFHNMVVGVSEGFKKELELRGVGYRAQMKGKTLVLNVGYSHPVEFEEEEGITFETPSATSIIVSGINKEEVGDCAARIRATRAPEPYKGKGIRYVGEYVRRKEGKTGK.

It belongs to the universal ribosomal protein uL6 family. As to quaternary structure, part of the 50S ribosomal subunit.

This protein binds to the 23S rRNA, and is important in its secondary structure. It is located near the subunit interface in the base of the L7/L12 stalk, and near the tRNA binding site of the peptidyltransferase center. This Ligilactobacillus salivarius (strain UCC118) (Lactobacillus salivarius) protein is Large ribosomal subunit protein uL6.